The following is a 118-amino-acid chain: Holo-[acyl-carrier-protein] synthase (118 aa).

Positions 8 and 58 each coordinate Mg(2+).

The protein belongs to the P-Pant transferase superfamily. AcpS family. The cofactor is Mg(2+).

It is found in the cytoplasm. The enzyme catalyses apo-[ACP] + CoA = holo-[ACP] + adenosine 3',5'-bisphosphate + H(+). Transfers the 4'-phosphopantetheine moiety from coenzyme A to a Ser of acyl-carrier-protein. In Listeria monocytogenes serotype 4b (strain CLIP80459), this protein is Holo-[acyl-carrier-protein] synthase.